We begin with the raw amino-acid sequence, 598 residues long: Protein HIGH CHLOROPHYLL FLUORESCENCE PHENOTYPE 173, chloroplastic (598 aa).

The transit peptide at 1–79 directs the protein to the chloroplast; sequence MVGSIVGSNM…ITTKESEETV (79 aa). Residues 42-106 are disordered; it reads VIPRAQSSSS…PTLKLDDVNP (65 aa). Positions 73-84 are enriched in basic and acidic residues; that stretch reads KESEETVAKKLD. A compositionally biased stretch (pro residues) spans 87–97; the sequence is PPSPQSPPSPP.

Belongs to the NmrA-type oxidoreductase family. As to quaternary structure, component of a high molecular weight complex containing psbA mRNA, OHP1, OHP2 and HCF244, and PSII core proteins D1/D2, HCF136 and HCF173. Interacts with LPE1.

The protein localises to the plastid. The protein resides in the chloroplast membrane. It is found in the chloroplast thylakoid membrane. Its subcellular location is the chloroplast stroma. Auxiliary factor required, together with HCF244, for the biogenesis of photosystem II (PSII), especially for the synthesis of the reaction center proteins (e.g. D1), via the regulation of the corresponding mRNA (e.g. psbA) translation initiation (ribosomal loading) and stabilization. The chain is Protein HIGH CHLOROPHYLL FLUORESCENCE PHENOTYPE 173, chloroplastic from Arabidopsis thaliana (Mouse-ear cress).